The primary structure comprises 307 residues: UDP-N-acetylenolpyruvoylglucosamine reductase (307 aa).

Positions 34–197 (VGGNAEALFR…LSASLKGRPG (164 aa)) constitute an FAD-binding PCMH-type domain. Arg177 is a catalytic residue. Ser226 serves as the catalytic Proton donor. Residue Glu296 is part of the active site.

This sequence belongs to the MurB family. FAD serves as cofactor.

The protein resides in the cytoplasm. The catalysed reaction is UDP-N-acetyl-alpha-D-muramate + NADP(+) = UDP-N-acetyl-3-O-(1-carboxyvinyl)-alpha-D-glucosamine + NADPH + H(+). Its pathway is cell wall biogenesis; peptidoglycan biosynthesis. Its function is as follows. Cell wall formation. In Paramagnetospirillum magneticum (strain ATCC 700264 / AMB-1) (Magnetospirillum magneticum), this protein is UDP-N-acetylenolpyruvoylglucosamine reductase.